The sequence spans 241 residues: Zinc finger CCHC domain-containing protein 24 (241 aa).

Residues S65 and S93 each carry the phosphoserine modification. The segment at Y132–Q149 adopts a CCHC-type zinc-finger fold.

The protein is Zinc finger CCHC domain-containing protein 24 of Mus musculus (Mouse).